Consider the following 266-residue polypeptide: Small ribosomal subunit protein uS3 (266 aa).

The 69-residue stretch at 39–107 folds into the KH type-2 domain; the sequence is VREYLKKKLK…PVHVNIEEIR (69 aa). The tract at residues 218-266 is disordered; sequence EVAEDKRPRRNARPGDRRPRRDGEGGAPGARRGAPRRGAGKPEDGKTGE. Composition is skewed to basic and acidic residues over residues 230-241 and 257-266; these read RPGDRRPRRDGE and GKPEDGKTGE.

This sequence belongs to the universal ribosomal protein uS3 family. In terms of assembly, part of the 30S ribosomal subunit. Forms a tight complex with proteins S10 and S14.

In terms of biological role, binds the lower part of the 30S subunit head. Binds mRNA in the 70S ribosome, positioning it for translation. The chain is Small ribosomal subunit protein uS3 from Burkholderia multivorans (strain ATCC 17616 / 249).